A 79-amino-acid polypeptide reads, in one-letter code: Putative membrane protein insertion efficiency factor (79 aa).

Belongs to the UPF0161 family.

It is found in the cell inner membrane. Could be involved in insertion of integral membrane proteins into the membrane. This is Putative membrane protein insertion efficiency factor from Prochlorococcus marinus (strain NATL2A).